The primary structure comprises 100 residues: uncharacterized protein (100 aa).

This is an uncharacterized protein from Mycoplasma genitalium (strain ATCC 33530 / DSM 19775 / NCTC 10195 / G37) (Mycoplasmoides genitalium).